Reading from the N-terminus, the 868-residue chain is Metabotropic glutamate receptor 6 (868 aa).

An N-terminal signal peptide occupies residues 1–20; the sequence is MARLLLALLAWLAQMSPVRA. Residues 21–576 lie on the Extracellular side of the membrane; the sequence is AGSVRLAGGL…VVRLTWSSPW (556 aa). Residues Cys-48 and Cys-90 are joined by a disulfide bond. L-glutamate is bound by residues Ser-145, 166–168, and Tyr-216; that span reads AST. Cystine bridges form between Cys-235-Cys-527, Cys-358-Cys-374, Cys-414-Cys-421, Cys-509-Cys-528, Cys-513-Cys-531, Cys-534-Cys-546, and Cys-549-Cys-562. A glycan (N-linked (GlcNAc...) asparagine) is linked at Asn-287. Asp-298 is a binding site for L-glutamate. Lys-391 provides a ligand contact to L-glutamate. Asn-442 and Asn-470 each carry an N-linked (GlcNAc...) asparagine glycan. Asn-558 is a glycosylation site (N-linked (GlcNAc...) asparagine). Residues 577–599 traverse the membrane as a helical segment; the sequence is AAPPLLLAVLGIMATTTVVGTFV. Residues 600–613 are Cytoplasmic-facing; the sequence is RHNNTPIVRASGRE. A helical transmembrane segment spans residues 614–634; it reads LSYVLLTGIFLIYAVTFLMVA. Over 635–645 the chain is Extracellular; it reads EPGAAVCATRR. A helical transmembrane segment spans residues 646 to 664; sequence LFLGLGTTLSYSALLTKTN. At 665–688 the chain is on the cytoplasmic side; sequence RIYRIFEQGKRSVTPPPFISPTSQ. Residues 689–709 form a helical membrane-spanning segment; the sequence is LVITFSLTSLQVVGVIAWLGA. Residues 710-739 lie on the Extracellular side of the membrane; the sequence is QPPHSVIDYEEQRTVDPEQARGVLKCDMSD. A helical membrane pass occupies residues 740–761; sequence LSLIGCLGYSLLLMVTCTVYAI. Over 762 to 774 the chain is Cytoplasmic; that stretch reads KARGVPETFNEAK. A helical transmembrane segment spans residues 775 to 797; sequence PIGFTMYTTCIVWLAFVPIFFGT. At 798 to 810 the chain is on the extracellular side; sequence AQSAEKIYIQTTT. A helical membrane pass occupies residues 811-836; it reads LTVSLSLSASVSLGMLYVPKTYVILF. Residues 837–868 lie on the Cytoplasmic side of the membrane; that stretch reads HPEQNVQKRKRSLKTTSTVAAPPKGADTEDPK. The disordered stretch occupies residues 845–868; that stretch reads RKRSLKTTSTVAAPPKGADTEDPK.

Belongs to the G-protein coupled receptor 3 family. As to quaternary structure, homodimer. Interacts with GPR179. Interacts with photoreceptor synaptic protein LRIT1 (via its N-terminal extracellular domain).

It is found in the cell membrane. Its subcellular location is the endoplasmic reticulum membrane. It localises to the golgi apparatus membrane. The protein resides in the cell projection. The protein localises to the dendrite. In terms of biological role, G-protein coupled receptor for glutamate. Ligand binding causes a conformation change that triggers signaling via guanine nucleotide-binding proteins (G proteins) and modulates the activity of down-stream effectors, such as adenylate cyclase. Signaling inhibits adenylate cyclase activity. Signaling stimulates TRPM1 channel activity and Ca(2+) uptake. Required for normal vision. This chain is Metabotropic glutamate receptor 6 (GRM6), found in Oryctolagus cuniculus (Rabbit).